The primary structure comprises 878 residues: Alanine--tRNA ligase (878 aa).

H567, H571, C669, and H673 together coordinate Zn(2+).

It belongs to the class-II aminoacyl-tRNA synthetase family. Requires Zn(2+) as cofactor.

It localises to the cytoplasm. The enzyme catalyses tRNA(Ala) + L-alanine + ATP = L-alanyl-tRNA(Ala) + AMP + diphosphate. In terms of biological role, catalyzes the attachment of alanine to tRNA(Ala) in a two-step reaction: alanine is first activated by ATP to form Ala-AMP and then transferred to the acceptor end of tRNA(Ala). Also edits incorrectly charged Ser-tRNA(Ala) and Gly-tRNA(Ala) via its editing domain. In Rickettsia akari (strain Hartford), this protein is Alanine--tRNA ligase.